A 496-amino-acid polypeptide reads, in one-letter code: Nectin 1a (496 aa).

Residues 1–20 (MMFINLLLRLMCVFLIGADG) form the signal peptide. Residues 21 to 349 (QMVQMESSKA…FQDQQQAGVV (329 aa)) lie on the Extracellular side of the membrane. The Ig-like V-type domain maps to 34 to 138 (GSQVELPCQF…GNRENMVNLT (105 aa)). C41 and C121 are oxidised to a cystine. 2 N-linked (GlcNAc...) asparagine glycosylation sites follow: N62 and N136. Ig-like C2-type domains lie at 143–238 (PMIQ…VTLN) and 243–330 (PEVI…VIVT). 2 disulfides stabilise this stretch: C168-C222 and C265-C312. N-linked (GlcNAc...) asparagine glycosylation is present at N282. A helical membrane pass occupies residues 350 to 370 (IGGAVVCGTVLLAAVTLLVVF). Residues 371–496 (LYRRRCMFKG…SVISKEEWYV (126 aa)) are Cytoplasmic-facing.

This sequence belongs to the nectin family. In terms of assembly, cis- and trans-homodimer. Can form trans-heterodimers. In terms of tissue distribution, expressed in the developing eye and nervous system.

The protein resides in the cell membrane. It is found in the cell junction. It localises to the adherens junction. In terms of biological role, cell adhesion molecule that promotes cell-cell contacts and plays important roles in the development of the nervous system. Acts by forming homophilic or heterophilic trans-dimers. The chain is Nectin 1a from Danio rerio (Zebrafish).